Here is a 368-residue protein sequence, read N- to C-terminus: 4-hydroxy-3-methylbut-2-en-1-yl diphosphate synthase (flavodoxin) (368 aa).

The [4Fe-4S] cluster site is built by Cys-271, Cys-274, Cys-306, and Glu-313.

The protein belongs to the IspG family. The cofactor is [4Fe-4S] cluster.

The catalysed reaction is (2E)-4-hydroxy-3-methylbut-2-enyl diphosphate + oxidized [flavodoxin] + H2O + 2 H(+) = 2-C-methyl-D-erythritol 2,4-cyclic diphosphate + reduced [flavodoxin]. It participates in isoprenoid biosynthesis; isopentenyl diphosphate biosynthesis via DXP pathway; isopentenyl diphosphate from 1-deoxy-D-xylulose 5-phosphate: step 5/6. In terms of biological role, converts 2C-methyl-D-erythritol 2,4-cyclodiphosphate (ME-2,4cPP) into 1-hydroxy-2-methyl-2-(E)-butenyl 4-diphosphate. The protein is 4-hydroxy-3-methylbut-2-en-1-yl diphosphate synthase (flavodoxin) of Histophilus somni (strain 129Pt) (Haemophilus somnus).